A 493-amino-acid chain; its full sequence is Tripartite motif-containing protein 5 (493 aa).

A2 carries the post-translational modification N-acetylalanine. An RING-type zinc finger spans residues 15 to 59; it reads CPICLELLTQPLSLDCGHSFCQACLTANHKKSMLDKGESSCPVCR. S86 is modified (phosphoserine). Residues 90–132 form a B box-type zinc finger; the sequence is QKVDHCARHGEKLLLFCQEDGKVICWLCERSQEHRGHHTFLTE. Residues C95, H98, C117, and H123 each contribute to the Zn(2+) site. Residues 130–241 are a coiled coil; that stretch reads LTEEVAREYQ…ISDLEHRLQG (112 aa). Residues 185–198 are required for interaction with GABARAP and for autophagy; the sequence is FEQLRDILDWEESN. The B30.2/SPRY domain maps to 281-493; that stretch reads LKGMLEVFRE…VPMTLCSPSS (213 aa).

Belongs to the TRIM/RBCC family. In terms of assembly, can form homodimers and homotrimers. In addition to lower-order dimerization, also exhibits a higher-order multimerization and both low- and high-order multimerizations are essential for its restriction activity. Isoform Delta interacts with BTBD1 and BTBD2. Interacts with PSMC4, PSMC5, PSMD7 and HSPA8/HSC70. Interacts (via B30.2/SPRY domain) with HSPA1A/B. Interacts with PSMC2, MAP3K7/TAK1, TAB2 and TAB3. Interacts with SQSTM1. Interacts with TRIM6 and TRIM34. Interacts with ULK1 (phosphorylated form), GABARAP, GABARAPL1, GABARAPL2, MAP1LC3A, MAP1LC3C and BECN1. Degraded in a proteasome-independent fashion in the absence of viral infection but in a proteasome-dependent fashion following exposure to restriction sensitive virus. Post-translationally, autoubiquitinated in a RING finger- and UBE2D2-dependent manner. Monoubiquitinated by TRIM21. Deubiquitinated by Yersinia YopJ. Ubiquitination may not lead to proteasomal degradation.

It localises to the cytoplasm. It is found in the nucleus. It carries out the reaction S-ubiquitinyl-[E2 ubiquitin-conjugating enzyme]-L-cysteine + [acceptor protein]-L-lysine = [E2 ubiquitin-conjugating enzyme]-L-cysteine + N(6)-ubiquitinyl-[acceptor protein]-L-lysine.. The protein operates within protein modification; protein ubiquitination. In terms of biological role, capsid-specific restriction factor that prevents infection from non-host-adapted retroviruses. Blocks viral replication early in the life cycle, after viral entry but before reverse transcription. In addition to acting as a capsid-specific restriction factor, also acts as a pattern recognition receptor that activates innate immune signaling in response to the retroviral capsid lattice. Binding to the viral capsid triggers its E3 ubiquitin ligase activity, and in concert with the heterodimeric ubiquitin conjugating enzyme complex UBE2V1-UBE2N (also known as UBC13-UEV1A complex) generates 'Lys-63'-linked polyubiquitin chains, which in turn are catalysts in the autophosphorylation of the MAP3K7/TAK1 complex (includes TAK1, TAB2, and TAB3). Activation of the MAP3K7/TAK1 complex by autophosphorylation results in the induction and expression of NF-kappa-B and MAPK-responsive inflammatory genes, thereby leading to an innate immune response in the infected cell. Restricts infection by N-tropic murine leukemia virus (N-MLV), equine infectious anemia virus (EIAV), simian immunodeficiency virus of macaques (SIVmac), feline immunodeficiency virus (FIV), and bovine immunodeficiency virus (BIV). Plays a role in regulating autophagy through activation of autophagy regulator BECN1 by causing its dissociation from its inhibitors BCL2 and TAB2. Also plays a role in autophagy by acting as a selective autophagy receptor which recognizes and targets HIV-1 capsid protein p24 for autophagic destruction. This Homo sapiens (Human) protein is Tripartite motif-containing protein 5 (TRIM5).